Reading from the N-terminus, the 244-residue chain is Cell division protein ZapD (244 aa).

Belongs to the ZapD family. Interacts with FtsZ.

The protein resides in the cytoplasm. In terms of biological role, cell division factor that enhances FtsZ-ring assembly. Directly interacts with FtsZ and promotes bundling of FtsZ protofilaments, with a reduction in FtsZ GTPase activity. The protein is Cell division protein ZapD of Shewanella sp. (strain MR-7).